The following is a 262-amino-acid chain: Putative glycyl-radical enzyme activating enzyme HI_0520 (262 aa).

Residues 20 to 262 (VEGQGNRSSI…CGINKILTIL (243 aa)) enclose the Radical SAM core domain. [4Fe-4S] cluster is bound by residues Cys-34, Cys-38, and Cys-41. S-adenosyl-L-methionine contacts are provided by residues 40-42 (YCH), Gly-81, and 130-132 (DLK).

The protein belongs to the organic radical-activating enzymes family. [4Fe-4S] cluster is required as a cofactor.

It catalyses the reaction glycyl-[protein] + reduced [flavodoxin] + S-adenosyl-L-methionine = glycin-2-yl radical-[protein] + semiquinone [flavodoxin] + 5'-deoxyadenosine + L-methionine + H(+). The polypeptide is Putative glycyl-radical enzyme activating enzyme HI_0520 (Haemophilus influenzae (strain ATCC 51907 / DSM 11121 / KW20 / Rd)).